A 774-amino-acid chain; its full sequence is Two pore channel protein 2 (774 aa).

At 1–92 (MEEEPLLAGS…GSLRLYRWYY (92 aa)) the chain is on the cytoplasmic side. A helical transmembrane segment spans residues 93-113 (SNLCQWGLGLTIAVVLALAFI). Topologically, residues 114–140 (ERPSSLTYTSDIRVKPKPWEPPCGMTE) are extracellular. Residues 141–161 (GIEIVCLCIFILDVTAKGYLI) form a helical membrane-spanning segment. Over 162–170 (GWEEFRMNK) the chain is Cytoplasmic. Residues 171 to 191 (WLLAYLIVITASVIDWMLSIS) form a helical membrane-spanning segment. Residues 192–197 (MLCDEN) lie on the Extracellular side of the membrane. The helical transmembrane segment at 198–218 (LRVRRLIRPFFLLQNSSLMKK) threads the bilayer. Residues 217–221 (KKTLK) are interaction with phosphatidylinositol 3,5-bisphosphate. Residues 219–232 (TLKCIKRTLPEIAS) lie on the Cytoplasmic side of the membrane. A helical membrane pass occupies residues 233–253 (VILLLALHICLFTMIGMLIFA). Residues 254–267 (KSDDPKQNGEWQTY) are Extracellular-facing. An intramembrane region (helical; Pore-forming) is located at residues 268–292 (FRNLPKALSSLLVLLTTANNPDVMI). Over 293-302 (PAYSLNRGYS) the chain is Extracellular. Residues 303–323 (IFFILFSVFGTYLLMNLMTAI) form a helical membrane-spanning segment. Residues 324–452 (IYNQFRGYLL…YVYSHYYISV (129 aa)) lie on the Cytoplasmic side of the membrane. The chain crosses the membrane as a helical span at residues 453–475 (LGNAVALANVICICTVLVLNAEK). Residues 476–486 (SASEKNYFYME) lie on the Extracellular side of the membrane. A helical transmembrane segment spans residues 487-507 (IINCIFILYYLIEMLLKIVAF). Residues 508-518 (GWKGYLSYRNN) lie on the Cytoplasmic side of the membrane. Residues 519–539 (IFDGFLTVLLLAIQIVIFITF) traverse the membrane as a helical segment. Residues 540–564 (KIPYVDVDPVPRHVMALWEMIRLVN) are Extracellular-facing. A helical transmembrane segment spans residues 565 to 585 (MLIVFRFLRIIPEIKLMAVVA). The Cytoplasmic portion of the chain corresponds to 586–596 (STIVDLVKNLR). Residues 597–617 (AFAGILLVVYYMFAVLGIWLF) traverse the membrane as a helical segment. Topologically, residues 618–658 (QGAISPPSNMSLVSNSSLENITGPYSMECGTFEQLEYWPNN) are extracellular. N626, N632, and N637 each carry an N-linked (GlcNAc...) asparagine glycan. Positions 659–681 (FDDFASSLILLYNIMVVNNWHVF) form an intramembrane region, helical; Pore-forming. Residues 682 to 696 (TDAYARYTTDWSLVY) are Extracellular-facing. A helical membrane pass occupies residues 697 to 717 (FVVWWLTSSVMWVNLFVALIL). Residues 718–774 (ENFTYKWDRSNGLSVEDVERIAYQSTVQLMFKEHVKEPTEEELLAQLHQHPHLHLSW) are Cytoplasmic-facing.

Belongs to the calcium channel alpha-1 subunit (TC 1.A.1.11) family. Two pore calcium channel subfamily. As to quaternary structure, homodimer. In terms of processing, N-glycosylated.

Its subcellular location is the late endosome membrane. The protein resides in the lysosome membrane. It carries out the reaction Na(+)(in) = Na(+)(out). The enzyme catalyses Ca(2+)(in) = Ca(2+)(out). In terms of biological role, intracellular channel initially characterized as a non-selective Ca(2+)-permeable channel activated by NAADP (nicotinic acid adenine dinucleotide phosphate), it is also a highly-selective Na(+) channel activated directly by PI(3,5)P2 (phosphatidylinositol 3,5-bisphosphate). Localizes to the lysosomal and late endosome membranes where it regulates organellar membrane excitability, membrane trafficking, and pH homeostasis. The sequence is that of Two pore channel protein 2 (tpcn2) from Danio rerio (Zebrafish).